The chain runs to 357 residues: SNF1-related protein kinase regulatory subunit gamma-like PV42b (357 aa).

CBS domains follow at residues 16–97, 113–185, 198–273, and 293–351; these read MIDK…DGES, HCPE…SSQL, AIHN…WLPL, and STPG…ALLS.

The protein belongs to the 5'-AMP-activated protein kinase gamma subunit family. In terms of tissue distribution, expressed highly in rosette leaves, cauline leaves, open flowers, developing siliques and dry seeds, but at a low level in stems and floral buds.

Functionally, plays redundant role with PV42a in regulating male gametogenesis and pollen tube guidance. This chain is SNF1-related protein kinase regulatory subunit gamma-like PV42b (PV42B), found in Arabidopsis thaliana (Mouse-ear cress).